We begin with the raw amino-acid sequence, 318 residues long: GTP cyclohydrolase MptA (318 aa).

It belongs to the GTP cyclohydrolase IV family. As to quaternary structure, homodimer. The cofactor is Fe(2+).

The catalysed reaction is GTP + H2O = 7,8-dihydroneopterin 2',3'-cyclic phosphate + formate + diphosphate + H(+). It functions in the pathway cofactor biosynthesis; 5,6,7,8-tetrahydromethanopterin biosynthesis. In terms of biological role, converts GTP to 7,8-dihydro-D-neopterin 2',3'-cyclic phosphate, the first intermediate in the biosynthesis of coenzyme methanopterin. The sequence is that of GTP cyclohydrolase MptA from Methanosarcina mazei (strain ATCC BAA-159 / DSM 3647 / Goe1 / Go1 / JCM 11833 / OCM 88) (Methanosarcina frisia).